The primary structure comprises 357 residues: GTPase Obg (357 aa).

The region spanning 1–159 (MKFVDEAEIQ…RTLKLELKLL (159 aa)) is the Obg domain. The 184-residue stretch at 160–343 (ADIGMLGFPN…IMKSAMTLFE (184 aa)) folds into the OBG-type G domain. GTP-binding positions include 166 to 173 (GFPNVGKS), 191 to 195 (FTTLY), 213 to 216 (DVPG), 293 to 296 (NKAD), and 324 to 326 (SAV). 2 residues coordinate Mg(2+): S173 and T193.

It belongs to the TRAFAC class OBG-HflX-like GTPase superfamily. OBG GTPase family. As to quaternary structure, monomer. The cofactor is Mg(2+).

The protein localises to the cytoplasm. In terms of biological role, an essential GTPase which binds GTP, GDP and possibly (p)ppGpp with moderate affinity, with high nucleotide exchange rates and a fairly low GTP hydrolysis rate. Plays a role in control of the cell cycle, stress response, ribosome biogenesis and in those bacteria that undergo differentiation, in morphogenesis control. The protein is GTPase Obg of Xylella fastidiosa (strain 9a5c).